The primary structure comprises 446 residues: tRNA-2-methylthio-N(6)-dimethylallyladenosine synthase (446 aa).

The MTTase N-terminal domain occupies Lys2–Glu122. Cys11, Cys47, Cys85, Cys157, Cys161, and Cys164 together coordinate [4Fe-4S] cluster. In terms of domain architecture, Radical SAM core spans Arg143–Ala375. The TRAM domain occupies Ala378 to Glu440.

This sequence belongs to the methylthiotransferase family. MiaB subfamily. As to quaternary structure, monomer. Requires [4Fe-4S] cluster as cofactor.

Its subcellular location is the cytoplasm. It carries out the reaction N(6)-dimethylallyladenosine(37) in tRNA + (sulfur carrier)-SH + AH2 + 2 S-adenosyl-L-methionine = 2-methylsulfanyl-N(6)-dimethylallyladenosine(37) in tRNA + (sulfur carrier)-H + 5'-deoxyadenosine + L-methionine + A + S-adenosyl-L-homocysteine + 2 H(+). In terms of biological role, catalyzes the methylthiolation of N6-(dimethylallyl)adenosine (i(6)A), leading to the formation of 2-methylthio-N6-(dimethylallyl)adenosine (ms(2)i(6)A) at position 37 in tRNAs that read codons beginning with uridine. The protein is tRNA-2-methylthio-N(6)-dimethylallyladenosine synthase of Methylorubrum extorquens (strain CM4 / NCIMB 13688) (Methylobacterium extorquens).